Consider the following 172-residue polypeptide: 3-hydroxydecanoyl-[acyl-carrier-protein] dehydratase (172 aa).

Residue His-71 is part of the active site.

It belongs to the thioester dehydratase family. FabA subfamily. In terms of assembly, homodimer.

It is found in the cytoplasm. It catalyses the reaction a (3R)-hydroxyacyl-[ACP] = a (2E)-enoyl-[ACP] + H2O. The enzyme catalyses (3R)-hydroxydecanoyl-[ACP] = (2E)-decenoyl-[ACP] + H2O. The catalysed reaction is (2E)-decenoyl-[ACP] = (3Z)-decenoyl-[ACP]. It functions in the pathway lipid metabolism; fatty acid biosynthesis. Its function is as follows. Necessary for the introduction of cis unsaturation into fatty acids. Catalyzes the dehydration of (3R)-3-hydroxydecanoyl-ACP to E-(2)-decenoyl-ACP and then its isomerization to Z-(3)-decenoyl-ACP. Can catalyze the dehydratase reaction for beta-hydroxyacyl-ACPs with saturated chain lengths up to 16:0, being most active on intermediate chain length. In Vibrio vulnificus (strain CMCP6), this protein is 3-hydroxydecanoyl-[acyl-carrier-protein] dehydratase.